A 213-amino-acid chain; its full sequence is Pyrrolidone-carboxylate peptidase (213 aa).

Catalysis depends on residues Glu78, Cys141, and His165.

It belongs to the peptidase C15 family. Homotetramer.

It is found in the cytoplasm. The enzyme catalyses Release of an N-terminal pyroglutamyl group from a polypeptide, the second amino acid generally not being Pro.. Its function is as follows. Removes 5-oxoproline from various penultimate amino acid residues except L-proline. This is Pyrrolidone-carboxylate peptidase from Alkaliphilus oremlandii (strain OhILAs) (Clostridium oremlandii (strain OhILAs)).